Consider the following 369-residue polypeptide: Replication factor C subunit 5 (369 aa).

A disordered region spans residues 21–40 (INKGKDVVGFGPPPQSKATP). 79 to 86 (GPPGTGKT) provides a ligand contact to ATP.

This sequence belongs to the activator 1 small subunits family. Heterotetramer of subunits RFC2, RFC3, RFC4 and RFC5 that can form a complex with RFC1.

Its subcellular location is the nucleus. In terms of biological role, functions in cell replication and proliferation. May be involved in chromatin assembly and remodeling. Plays a role in the negative control of pathogenesis-related gene expression and systemic acquired resistance (SAR). The chain is Replication factor C subunit 5 (RFC5) from Arabidopsis thaliana (Mouse-ear cress).